A 343-amino-acid polypeptide reads, in one-letter code: Flavone 3'-O-methyltransferase OMT1 (343 aa).

Asn107 contacts (E)-ferulate. S-adenosyl-L-homocysteine contacts are provided by Gly184, Asp207, Asp227, Met228, Met240, and Lys241. His245 (proton acceptor) is an active-site residue. Asp246 contributes to the (E)-5-hydroxyferulate binding site. Catalysis depends on residues Glu273 and Glu305.

This sequence belongs to the class I-like SAM-binding methyltransferase superfamily. Cation-independent O-methyltransferase family. COMT subfamily. Homodimer.

It catalyses the reaction (E)-5-hydroxyferulate + S-adenosyl-L-methionine = (E)-sinapate + S-adenosyl-L-homocysteine + H(+). The enzyme catalyses luteolin + S-adenosyl-L-methionine = chrysoeriol + S-adenosyl-L-homocysteine + H(+). The catalysed reaction is quercetin + S-adenosyl-L-methionine = isorhamnetin + S-adenosyl-L-homocysteine + H(+). It carries out the reaction (E)-caffeate + S-adenosyl-L-methionine = (E)-ferulate + S-adenosyl-L-homocysteine + H(+). It catalyses the reaction a 3'-hydroxyflavone + S-adenosyl-L-methionine = a 3'-methoxyflavone + S-adenosyl-L-homocysteine + H(+). It functions in the pathway flavonoid metabolism. Functionally, catalyzes the 3'-O-methylation of the flavonoids luteolin and quercetin. Catalyzes the 3- of 5-O-methylation of the phenylpropanoids caffeate and 5-hydroxyferulate. Substrate preference is 5-hydroxyferulate &gt; luteolin &gt; quercetin &gt; caffeate. Apigenin, kempferol and 3,4-dimethylquercetin do not seem to be substrates for methylation. The protein is Flavone 3'-O-methyltransferase OMT1 of Chrysosplenium americanum (American golden saxifrage).